The primary structure comprises 333 residues: Quinolinate synthase (333 aa).

Iminosuccinate-binding residues include H41 and S58. C103 lines the [4Fe-4S] cluster pocket. Residues 129-131 (YIN) and S146 contribute to the iminosuccinate site. C189 contributes to the [4Fe-4S] cluster binding site. Iminosuccinate is bound by residues 215–217 (HPE) and T232. C282 serves as a coordination point for [4Fe-4S] cluster.

It belongs to the quinolinate synthase family. Type 2 subfamily. Requires [4Fe-4S] cluster as cofactor.

It is found in the cytoplasm. It catalyses the reaction iminosuccinate + dihydroxyacetone phosphate = quinolinate + phosphate + 2 H2O + H(+). Its pathway is cofactor biosynthesis; NAD(+) biosynthesis; quinolinate from iminoaspartate: step 1/1. Functionally, catalyzes the condensation of iminoaspartate with dihydroxyacetone phosphate to form quinolinate. The sequence is that of Quinolinate synthase from Prochlorococcus marinus (strain MIT 9313).